The primary structure comprises 502 residues: ATP synthase subunit alpha (502 aa).

Residue Gly169–Thr176 coordinates ATP.

This sequence belongs to the ATPase alpha/beta chains family. In terms of assembly, F-type ATPases have 2 components, CF(1) - the catalytic core - and CF(0) - the membrane proton channel. CF(1) has five subunits: alpha(3), beta(3), gamma(1), delta(1), epsilon(1). CF(0) has three main subunits: a(1), b(2) and c(9-12). The alpha and beta chains form an alternating ring which encloses part of the gamma chain. CF(1) is attached to CF(0) by a central stalk formed by the gamma and epsilon chains, while a peripheral stalk is formed by the delta and b chains.

The protein localises to the cell membrane. The catalysed reaction is ATP + H2O + 4 H(+)(in) = ADP + phosphate + 5 H(+)(out). In terms of biological role, produces ATP from ADP in the presence of a proton gradient across the membrane. The alpha chain is a regulatory subunit. The protein is ATP synthase subunit alpha of Streptococcus pyogenes serotype M12 (strain MGAS9429).